The following is a 389-amino-acid chain: Phospho-N-acetylmuramoyl-pentapeptide-transferase (389 aa).

The next 10 helical transmembrane spans lie at R25–I45, T73–L93, F97–Y117, F135–A155, I190–A210, G222–M242, G258–W278, V286–I306, I311–V331, and Q366–L386.

Belongs to the glycosyltransferase 4 family. MraY subfamily. Requires Mg(2+) as cofactor.

Its subcellular location is the cell inner membrane. The catalysed reaction is UDP-N-acetyl-alpha-D-muramoyl-L-alanyl-gamma-D-glutamyl-meso-2,6-diaminopimeloyl-D-alanyl-D-alanine + di-trans,octa-cis-undecaprenyl phosphate = di-trans,octa-cis-undecaprenyl diphospho-N-acetyl-alpha-D-muramoyl-L-alanyl-D-glutamyl-meso-2,6-diaminopimeloyl-D-alanyl-D-alanine + UMP. The protein operates within cell wall biogenesis; peptidoglycan biosynthesis. In terms of biological role, catalyzes the initial step of the lipid cycle reactions in the biosynthesis of the cell wall peptidoglycan: transfers peptidoglycan precursor phospho-MurNAc-pentapeptide from UDP-MurNAc-pentapeptide onto the lipid carrier undecaprenyl phosphate, yielding undecaprenyl-pyrophosphoryl-MurNAc-pentapeptide, known as lipid I. This chain is Phospho-N-acetylmuramoyl-pentapeptide-transferase, found in Burkholderia vietnamiensis (strain G4 / LMG 22486) (Burkholderia cepacia (strain R1808)).